Consider the following 260-residue polypeptide: 4-hydroxy-tetrahydrodipicolinate reductase (260 aa).

NAD(+) is bound by residues 12 to 17, 92 to 94, and 118 to 121; these read GFRGKM, GTT, and APNF. Histidine 148 acts as the Proton donor/acceptor in catalysis. Histidine 149 is a (S)-2,3,4,5-tetrahydrodipicolinate binding site. Lysine 152 functions as the Proton donor in the catalytic mechanism. Position 158–159 (158–159) interacts with (S)-2,3,4,5-tetrahydrodipicolinate; it reads GT.

Belongs to the DapB family.

Its subcellular location is the cytoplasm. It catalyses the reaction (S)-2,3,4,5-tetrahydrodipicolinate + NAD(+) + H2O = (2S,4S)-4-hydroxy-2,3,4,5-tetrahydrodipicolinate + NADH + H(+). The catalysed reaction is (S)-2,3,4,5-tetrahydrodipicolinate + NADP(+) + H2O = (2S,4S)-4-hydroxy-2,3,4,5-tetrahydrodipicolinate + NADPH + H(+). The protein operates within amino-acid biosynthesis; L-lysine biosynthesis via DAP pathway; (S)-tetrahydrodipicolinate from L-aspartate: step 4/4. In terms of biological role, catalyzes the conversion of 4-hydroxy-tetrahydrodipicolinate (HTPA) to tetrahydrodipicolinate. This Lactococcus lactis subsp. cremoris (strain SK11) protein is 4-hydroxy-tetrahydrodipicolinate reductase.